A 363-amino-acid polypeptide reads, in one-letter code: Ribosomal RNA large subunit methyltransferase M (363 aa).

S-adenosyl-L-methionine contacts are provided by residues S190, 223 to 226 (CPGG), D242, D262, and D279. K308 serves as the catalytic Proton acceptor.

The protein belongs to the class I-like SAM-binding methyltransferase superfamily. RNA methyltransferase RlmE family. RlmM subfamily. Monomer.

The protein localises to the cytoplasm. The enzyme catalyses cytidine(2498) in 23S rRNA + S-adenosyl-L-methionine = 2'-O-methylcytidine(2498) in 23S rRNA + S-adenosyl-L-homocysteine + H(+). Functionally, catalyzes the 2'-O-methylation at nucleotide C2498 in 23S rRNA. In Aliivibrio salmonicida (strain LFI1238) (Vibrio salmonicida (strain LFI1238)), this protein is Ribosomal RNA large subunit methyltransferase M.